The primary structure comprises 180 residues: NEDD8-conjugating enzyme ubc-12 (180 aa).

Positions 24 to 180 (VRDKLLAQEL…RVREYISRYC (157 aa)) constitute a UBC core domain. Cysteine 112 functions as the Glycyl thioester intermediate in the catalytic mechanism.

It belongs to the ubiquitin-conjugating enzyme family. UBC12 subfamily.

The protein resides in the cytoplasm. It carries out the reaction [E1 NEDD8-activating enzyme]-S-[NEDD8 protein]-yl-L-cysteine + [E2 NEDD8-conjugating enzyme]-L-cysteine = [E1 NEDD8-activating enzyme]-L-cysteine + [E2 NEDD8-conjugating enzyme]-S-[NEDD8-protein]-yl-L-cysteine.. Its pathway is protein modification; protein neddylation. In terms of biological role, accepts the ubiquitin-like protein NEDD8 from the uba-3-ula-1 E1 complex and catalyzes its covalent attachment to other proteins. Plays a role in male tail tip morphogenesis. This chain is NEDD8-conjugating enzyme ubc-12, found in Caenorhabditis elegans.